A 386-amino-acid chain; its full sequence is ATP phosphoribosyltransferase regulatory subunit (386 aa).

Belongs to the class-II aminoacyl-tRNA synthetase family. HisZ subfamily. Heteromultimer composed of HisG and HisZ subunits.

It is found in the cytoplasm. It participates in amino-acid biosynthesis; L-histidine biosynthesis; L-histidine from 5-phospho-alpha-D-ribose 1-diphosphate: step 1/9. Required for the first step of histidine biosynthesis. May allow the feedback regulation of ATP phosphoribosyltransferase activity by histidine. The chain is ATP phosphoribosyltransferase regulatory subunit from Variovorax paradoxus (strain S110).